The chain runs to 192 residues: uncharacterized protein (192 aa).

The signal sequence occupies residues 1 to 17 (MFKKILFPLVALFMLAG). Cys-18 is lipidated: N-palmitoyl cysteine. Cys-18 carries S-diacylglycerol cysteine lipidation.

It to H.influenzae HI_0162.

It localises to the cell membrane. This is an uncharacterized protein from Escherichia coli O6:H1 (strain CFT073 / ATCC 700928 / UPEC).